A 582-amino-acid chain; its full sequence is Probable DNA ligase (582 aa).

Position 248 (E248) interacts with ATP. The active-site N6-AMP-lysine intermediate is the K250. ATP contacts are provided by R255, R270, E299, F339, R416, and K422.

It belongs to the ATP-dependent DNA ligase family. Mg(2+) is required as a cofactor.

The enzyme catalyses ATP + (deoxyribonucleotide)n-3'-hydroxyl + 5'-phospho-(deoxyribonucleotide)m = (deoxyribonucleotide)n+m + AMP + diphosphate.. Its function is as follows. DNA ligase that seals nicks in double-stranded DNA during DNA replication, DNA recombination and DNA repair. The polypeptide is Probable DNA ligase (Persephonella marina (strain DSM 14350 / EX-H1)).